Consider the following 180-residue polypeptide: Peptide deformylase (180 aa).

C88 and H130 together coordinate Fe cation. Residue E131 is part of the active site. H134 lines the Fe cation pocket.

This sequence belongs to the polypeptide deformylase family. The cofactor is Fe(2+).

It catalyses the reaction N-terminal N-formyl-L-methionyl-[peptide] + H2O = N-terminal L-methionyl-[peptide] + formate. In terms of biological role, removes the formyl group from the N-terminal Met of newly synthesized proteins. Requires at least a dipeptide for an efficient rate of reaction. N-terminal L-methionine is a prerequisite for activity but the enzyme has broad specificity at other positions. This is Peptide deformylase from Acidothermus cellulolyticus (strain ATCC 43068 / DSM 8971 / 11B).